Reading from the N-terminus, the 252-residue chain is Aspartate/glutamate leucyltransferase (252 aa).

It belongs to the R-transferase family. Bpt subfamily.

Its subcellular location is the cytoplasm. The enzyme catalyses N-terminal L-glutamyl-[protein] + L-leucyl-tRNA(Leu) = N-terminal L-leucyl-L-glutamyl-[protein] + tRNA(Leu) + H(+). It catalyses the reaction N-terminal L-aspartyl-[protein] + L-leucyl-tRNA(Leu) = N-terminal L-leucyl-L-aspartyl-[protein] + tRNA(Leu) + H(+). Functionally, functions in the N-end rule pathway of protein degradation where it conjugates Leu from its aminoacyl-tRNA to the N-termini of proteins containing an N-terminal aspartate or glutamate. The protein is Aspartate/glutamate leucyltransferase of Xanthomonas campestris pv. campestris (strain B100).